The sequence spans 85 residues: Small ribosomal subunit protein uS17 (85 aa).

This sequence belongs to the universal ribosomal protein uS17 family. Part of the 30S ribosomal subunit.

Functionally, one of the primary rRNA binding proteins, it binds specifically to the 5'-end of 16S ribosomal RNA. This Geobacter sulfurreducens (strain ATCC 51573 / DSM 12127 / PCA) protein is Small ribosomal subunit protein uS17.